The chain runs to 165 residues: Small ribosomal subunit protein uS5 (165 aa).

The S5 DRBM domain maps to 10–73 (LKEKVVSISR…EDAKKNLVEV (64 aa)).

The protein belongs to the universal ribosomal protein uS5 family. In terms of assembly, part of the 30S ribosomal subunit. Contacts proteins S4 and S8.

In terms of biological role, with S4 and S12 plays an important role in translational accuracy. Located at the back of the 30S subunit body where it stabilizes the conformation of the head with respect to the body. This Clostridium perfringens (strain ATCC 13124 / DSM 756 / JCM 1290 / NCIMB 6125 / NCTC 8237 / Type A) protein is Small ribosomal subunit protein uS5.